The chain runs to 250 residues: 3-deoxy-manno-octulosonate cytidylyltransferase (250 aa).

Belongs to the KdsB family.

It is found in the cytoplasm. The catalysed reaction is 3-deoxy-alpha-D-manno-oct-2-ulosonate + CTP = CMP-3-deoxy-beta-D-manno-octulosonate + diphosphate. The protein operates within nucleotide-sugar biosynthesis; CMP-3-deoxy-D-manno-octulosonate biosynthesis; CMP-3-deoxy-D-manno-octulosonate from 3-deoxy-D-manno-octulosonate and CTP: step 1/1. It functions in the pathway bacterial outer membrane biogenesis; lipopolysaccharide biosynthesis. Activates KDO (a required 8-carbon sugar) for incorporation into bacterial lipopolysaccharide in Gram-negative bacteria. This is 3-deoxy-manno-octulosonate cytidylyltransferase from Sinorhizobium medicae (strain WSM419) (Ensifer medicae).